The chain runs to 285 residues: Vacuolar protein sorting-associated protein 37B (285 aa).

Residues 50–170 (ASNRSLAEGN…EMVLKGQRLP (121 aa)) are interaction with IST1. Residues 84-173 (FEAYQIKKTK…LKGQRLPQAL (90 aa)) form the VPS37 C-terminal domain. The tract at residues 175 to 201 (PLPPRLPELAPTAPLPYPAPEASGPPA) is disordered. Position 218 is an omega-N-methylarginine (Arg218). Residues 230-285 (GQAVPYPGLQCPPLPPRVGLPTQQGFSSQFVSPYPPPLPQRPPPRLPPHQPGFILQ) are disordered. The segment covering 250 to 260 (PTQQGFSSQFV) has biased composition (polar residues). The span at 262-279 (PYPPPLPQRPPPRLPPHQ) shows a compositional bias: pro residues.

The protein belongs to the VPS37 family. As to quaternary structure, component of the ESCRT-I complex (endosomal sorting complex required for transport I) which consists of TSG101, VPS28, a VPS37 protein (VPS37A to -D) and MVB12A or MVB12B in a 1:1:1:1 stoichiometry. Interacts with TSG101, VPS28, MVB12A and MVB12B. Component of the ESCRT-I complex (endosomal sorting complex required for transport I) which consists of TSG101, VPS28, a VPS37 protein (VPS37A to -D) and UBAP1 in a 1:1:1:1 stoichiometry. Interacts with CEP55. Interacts with IST1. As to expression, widely expressed. Expressed in macrophages and lymphocytes.

The protein localises to the late endosome membrane. Its function is as follows. Component of the ESCRT-I complex, a regulator of vesicular trafficking process. Required for the sorting of endocytic ubiquitinated cargos into multivesicular bodies. May be involved in cell growth and differentiation. This chain is Vacuolar protein sorting-associated protein 37B (VPS37B), found in Homo sapiens (Human).